We begin with the raw amino-acid sequence, 341 residues long: UDP-N-acetylenolpyruvoylglucosamine reductase (341 aa).

In terms of domain architecture, FAD-binding PCMH-type spans 15–185 (VEQSCLSLIE…TAVGLRLPKA (171 aa)). The active site involves arginine 161. Serine 231 serves as the catalytic Proton donor. Residue glutamate 327 is part of the active site.

This sequence belongs to the MurB family. It depends on FAD as a cofactor.

Its subcellular location is the cytoplasm. It catalyses the reaction UDP-N-acetyl-alpha-D-muramate + NADP(+) = UDP-N-acetyl-3-O-(1-carboxyvinyl)-alpha-D-glucosamine + NADPH + H(+). The protein operates within cell wall biogenesis; peptidoglycan biosynthesis. Functionally, cell wall formation. This Shewanella sp. (strain ANA-3) protein is UDP-N-acetylenolpyruvoylglucosamine reductase.